Reading from the N-terminus, the 72-residue chain is Translation initiation factor IF-1 (72 aa).

Residues 1-72 form the S1-like domain; the sequence is MAKEDCIEME…TKGRIKFRSK (72 aa).

The protein belongs to the IF-1 family. In terms of assembly, component of the 30S ribosomal translation pre-initiation complex which assembles on the 30S ribosome in the order IF-2 and IF-3, IF-1 and N-formylmethionyl-tRNA(fMet); mRNA recruitment can occur at any time during PIC assembly.

It localises to the cytoplasm. Its function is as follows. One of the essential components for the initiation of protein synthesis. Stabilizes the binding of IF-2 and IF-3 on the 30S subunit to which N-formylmethionyl-tRNA(fMet) subsequently binds. Helps modulate mRNA selection, yielding the 30S pre-initiation complex (PIC). Upon addition of the 50S ribosomal subunit IF-1, IF-2 and IF-3 are released leaving the mature 70S translation initiation complex. The protein is Translation initiation factor IF-1 of Francisella tularensis subsp. tularensis (strain FSC 198).